A 395-amino-acid polypeptide reads, in one-letter code: ATP phosphoribosyltransferase regulatory subunit (395 aa).

The protein belongs to the class-II aminoacyl-tRNA synthetase family. HisZ subfamily. Heteromultimer composed of HisG and HisZ subunits.

The protein localises to the cytoplasm. Its pathway is amino-acid biosynthesis; L-histidine biosynthesis; L-histidine from 5-phospho-alpha-D-ribose 1-diphosphate: step 1/9. Its function is as follows. Required for the first step of histidine biosynthesis. May allow the feedback regulation of ATP phosphoribosyltransferase activity by histidine. The protein is ATP phosphoribosyltransferase regulatory subunit of Pseudomonas syringae pv. tomato (strain ATCC BAA-871 / DC3000).